We begin with the raw amino-acid sequence, 471 residues long: Heat shock 70 kDa protein 13 (471 aa).

A signal peptide spans 1-22; it reads MAREMTILGSAVLTLLLAGYLA. The interval 314–352 is disordered; that stretch reads EEQDRKEPHSSDTELPKDKLSSADDHRVNSGFGRGLSDK. The segment covering 315–341 has biased composition (basic and acidic residues); the sequence is EQDRKEPHSSDTELPKDKLSSADDHRV.

This sequence belongs to the heat shock protein 70 family. Binds UBQLN2.

Its subcellular location is the microsome. The protein localises to the endoplasmic reticulum. Its function is as follows. Has peptide-independent ATPase activity. This is Heat shock 70 kDa protein 13 (HSPA13) from Pongo abelii (Sumatran orangutan).